The sequence spans 107 residues: Small ribosomal subunit protein bS6 (107 aa).

It belongs to the bacterial ribosomal protein bS6 family.

In terms of biological role, binds together with bS18 to 16S ribosomal RNA. The polypeptide is Small ribosomal subunit protein bS6 (Synechococcus elongatus (strain ATCC 33912 / PCC 7942 / FACHB-805) (Anacystis nidulans R2)).